The primary structure comprises 662 residues: Transketolase (662 aa).

H28 serves as a coordination point for substrate. Residues H68 and 115 to 117 contribute to the thiamine diphosphate site; that span reads GPL. D156 provides a ligand contact to Mg(2+). The thiamine diphosphate site is built by G157 and N186. The Mg(2+) site is built by N186 and I188. Positions 261, 356, and 383 each coordinate substrate. Residue H261 participates in thiamine diphosphate binding. The Proton donor role is filled by E410. Residue F436 participates in thiamine diphosphate binding. 3 residues coordinate substrate: H460, D468, and R519.

Belongs to the transketolase family. Homodimer. The cofactor is Mg(2+). Ca(2+) is required as a cofactor. Mn(2+) serves as cofactor. It depends on Co(2+) as a cofactor. Requires thiamine diphosphate as cofactor.

The catalysed reaction is D-sedoheptulose 7-phosphate + D-glyceraldehyde 3-phosphate = aldehydo-D-ribose 5-phosphate + D-xylulose 5-phosphate. It participates in carbohydrate biosynthesis; Calvin cycle. It functions in the pathway carbohydrate degradation; pentose phosphate pathway. In terms of biological role, catalyzes the transfer of a two-carbon ketol group from a ketose donor to an aldose acceptor, via a covalent intermediate with the cofactor thiamine pyrophosphate. The sequence is that of Transketolase (tkt) from Staphylococcus epidermidis (strain ATCC 12228 / FDA PCI 1200).